The chain runs to 641 residues: E3 ubiquitin-protein ligase TRIM47 (641 aa).

An RING-type zinc finger spans residues 9 to 58 (CPICLEPLREPVTLPCGHNFCLACLGALWPHRSAGGTGGSGGPARCPLCQ). The residue at position 72 (T72) is a Phosphothreonine. The segment at 81–123 (QGSVPGPMSAPASGSTRGATPEPSAPSAPPPAPEPSAPCAPEQ) is disordered. Residues 103–118 (PSAPSAPPPAPEPSAP) show a composition bias toward pro residues. Residues 181 to 221 (LEESLCPRHLRPLERYCRVERVCLCEACATQDHRGHELVPL) form a B box-type zinc finger. Residues C186, H189, C208, and H213 each coordinate Zn(2+). Residues 305–325 (QGDLRRQEEQRSRLSKARHNL) are a coiled coil. S393 is subject to Phosphoserine. A disordered region spans residues 396–416 (DGLQKLGSEDVESQDPDSTSL). The 222-residue stretch at 413 to 634 (STSLLESEAP…LQIGPLKKSC (222 aa)) folds into the B30.2/SPRY domain. Position 464 is a phosphoserine (S464). R585 is modified (omega-N-methylarginine). A Phosphoserine modification is found at S591.

Belongs to the TRIM/RBCC family. As to expression, expressed in hepatocytes, expression is increased in fatty livers.

It is found in the cytoplasm. It localises to the nucleus. The catalysed reaction is S-ubiquitinyl-[E2 ubiquitin-conjugating enzyme]-L-cysteine + [acceptor protein]-L-lysine = [E2 ubiquitin-conjugating enzyme]-L-cysteine + N(6)-ubiquitinyl-[acceptor protein]-L-lysine.. It participates in protein modification; protein ubiquitination. In terms of biological role, E3 ubiquitin-protein ligase that mediates the ubiquitination and proteasomal degradation of CYLD. The protein is E3 ubiquitin-protein ligase TRIM47 of Mus musculus (Mouse).